The primary structure comprises 262 residues: Phosphatidylglycerol--prolipoprotein diacylglyceryl transferase (262 aa).

4 helical membrane passes run 17–37 (LAIHWYGLMYLIGFALVYALG), 57–77 (LIFYSVLGVVLGGRLGYVLFY), 95–115 (GGMSFHGGLIGVIVVMLLFAH), and 119–139 (LGFFTVSDFIAPLIPLGLAAG). Arg-140 is an a 1,2-diacyl-sn-glycero-3-phospho-(1'-sn-glycerol) binding site. 3 consecutive transmembrane segments (helical) span residues 173–193 (PSQLYELGLEGIVLFALLWWY), 200–220 (AGQVSAMFLMGYGAFRFLVEF), and 227–247 (FLGLLAAGLSMGQWLSIPMVL).

It belongs to the Lgt family.

It localises to the cell inner membrane. The catalysed reaction is L-cysteinyl-[prolipoprotein] + a 1,2-diacyl-sn-glycero-3-phospho-(1'-sn-glycerol) = an S-1,2-diacyl-sn-glyceryl-L-cysteinyl-[prolipoprotein] + sn-glycerol 1-phosphate + H(+). Its pathway is protein modification; lipoprotein biosynthesis (diacylglyceryl transfer). Functionally, catalyzes the transfer of the diacylglyceryl group from phosphatidylglycerol to the sulfhydryl group of the N-terminal cysteine of a prolipoprotein, the first step in the formation of mature lipoproteins. This chain is Phosphatidylglycerol--prolipoprotein diacylglyceryl transferase, found in Bordetella bronchiseptica (strain ATCC BAA-588 / NCTC 13252 / RB50) (Alcaligenes bronchisepticus).